Consider the following 344-residue polypeptide: Heat-inducible transcription repressor hrcA (344 aa).

Belongs to the HrcA family.

Negative regulator of class I heat shock genes (grpE-dnaK-dnaJ and groELS operons). Prevents heat-shock induction of these operons. The protein is Heat-inducible transcription repressor hrcA of Streptococcus pyogenes serotype M3 (strain ATCC BAA-595 / MGAS315).